The primary structure comprises 171 residues: S-ribosylhomocysteine lyase (171 aa).

Positions 54, 58, and 128 each coordinate Fe cation.

It belongs to the LuxS family. As to quaternary structure, homodimer. Fe cation serves as cofactor.

It catalyses the reaction S-(5-deoxy-D-ribos-5-yl)-L-homocysteine = (S)-4,5-dihydroxypentane-2,3-dione + L-homocysteine. Functionally, involved in the synthesis of autoinducer 2 (AI-2) which is secreted by bacteria and is used to communicate both the cell density and the metabolic potential of the environment. The regulation of gene expression in response to changes in cell density is called quorum sensing. Catalyzes the transformation of S-ribosylhomocysteine (RHC) to homocysteine (HC) and 4,5-dihydroxy-2,3-pentadione (DPD). This is S-ribosylhomocysteine lyase from Enterobacter sp. (strain 638).